The sequence spans 153 residues: UPF0756 membrane protein lmo1568 (153 aa).

4 helical membrane-spanning segments follow: residues 6 to 26 (MLFL…SLII), 54 to 74 (WGVT…QIGF), 80 to 100 (SFKS…SILA), and 117 to 137 (LVFG…GPVI).

Belongs to the UPF0756 family.

It localises to the cell membrane. The polypeptide is UPF0756 membrane protein lmo1568 (Listeria monocytogenes serovar 1/2a (strain ATCC BAA-679 / EGD-e)).